We begin with the raw amino-acid sequence, 904 residues long: Alanine--tRNA ligase (904 aa).

Residues H584, H588, C687, and H691 each contribute to the Zn(2+) site.

The protein belongs to the class-II aminoacyl-tRNA synthetase family. Requires Zn(2+) as cofactor.

The protein localises to the cytoplasm. It catalyses the reaction tRNA(Ala) + L-alanine + ATP = L-alanyl-tRNA(Ala) + AMP + diphosphate. Functionally, catalyzes the attachment of alanine to tRNA(Ala) in a two-step reaction: alanine is first activated by ATP to form Ala-AMP and then transferred to the acceptor end of tRNA(Ala). Also edits incorrectly charged Ser-tRNA(Ala) and Gly-tRNA(Ala) via its editing domain. The polypeptide is Alanine--tRNA ligase (Mycobacterium tuberculosis (strain ATCC 25177 / H37Ra)).